The primary structure comprises 184 residues: 2-C-methyl-D-erythritol 2,4-cyclodiphosphate synthase (184 aa).

A divalent metal cation contacts are provided by D17 and H19. 4-CDP-2-C-methyl-D-erythritol 2-phosphate contacts are provided by residues 17–19 and 47–48; these read DVH and HS. H55 contacts a divalent metal cation. Residues 74 to 78, F152, and R155 contribute to the 4-CDP-2-C-methyl-D-erythritol 2-phosphate site; that span reads FPNTD.

The protein belongs to the IspF family. In terms of assembly, homotrimer. Requires a divalent metal cation as cofactor.

The enzyme catalyses 4-CDP-2-C-methyl-D-erythritol 2-phosphate = 2-C-methyl-D-erythritol 2,4-cyclic diphosphate + CMP. Its pathway is isoprenoid biosynthesis; isopentenyl diphosphate biosynthesis via DXP pathway; isopentenyl diphosphate from 1-deoxy-D-xylulose 5-phosphate: step 4/6. In terms of biological role, involved in the biosynthesis of isopentenyl diphosphate (IPP) and dimethylallyl diphosphate (DMAPP), two major building blocks of isoprenoid compounds. Catalyzes the conversion of 4-diphosphocytidyl-2-C-methyl-D-erythritol 2-phosphate (CDP-ME2P) to 2-C-methyl-D-erythritol 2,4-cyclodiphosphate (ME-CPP) with a corresponding release of cytidine 5-monophosphate (CMP). This is 2-C-methyl-D-erythritol 2,4-cyclodiphosphate synthase from Anaplasma marginale (strain St. Maries).